A 510-amino-acid polypeptide reads, in one-letter code: Bifunctional purine biosynthesis protein PurH (510 aa).

The region spanning 1–145 (MSKRALISVS…KNFEDVLVVT (145 aa)) is the MGS-like domain.

Belongs to the PurH family.

The catalysed reaction is (6R)-10-formyltetrahydrofolate + 5-amino-1-(5-phospho-beta-D-ribosyl)imidazole-4-carboxamide = 5-formamido-1-(5-phospho-D-ribosyl)imidazole-4-carboxamide + (6S)-5,6,7,8-tetrahydrofolate. The enzyme catalyses IMP + H2O = 5-formamido-1-(5-phospho-D-ribosyl)imidazole-4-carboxamide. It functions in the pathway purine metabolism; IMP biosynthesis via de novo pathway; 5-formamido-1-(5-phospho-D-ribosyl)imidazole-4-carboxamide from 5-amino-1-(5-phospho-D-ribosyl)imidazole-4-carboxamide (10-formyl THF route): step 1/1. Its pathway is purine metabolism; IMP biosynthesis via de novo pathway; IMP from 5-formamido-1-(5-phospho-D-ribosyl)imidazole-4-carboxamide: step 1/1. The protein is Bifunctional purine biosynthesis protein PurH of Oceanobacillus iheyensis (strain DSM 14371 / CIP 107618 / JCM 11309 / KCTC 3954 / HTE831).